Reading from the N-terminus, the 266-residue chain is RNA-binding protein 7 (266 aa).

An N-acetylglycine modification is found at Gly-2. Positions 10–87 constitute an RRM domain; it reads RTLFVGNLET…RPIKIQFRSG (78 aa). 2 ZCCHC8 binding regions span residues 25–35 and 59–76; these read LLFELFHQAGP and HEVS…IKLY. The span at 90–115 shows a compositional bias: polar residues; it reads HAPQDVSLSYPQHHVGNSSPTSTSPS. Positions 90–118 are disordered; it reads HAPQDVSLSYPQHHVGNSSPTSTSPSRYE. 2 positions are modified to phosphoserine: Ser-136 and Ser-137. At Arg-152 the chain carries Omega-N-methylarginine. Residues 162–266 are disordered; the sequence is SSPLDQSGFS…RDGKWRSSRH (105 aa). Residues 173–188 are compositionally biased toward low complexity; it reads SVQSHSHSFNQSSSSQ. At Ser-204 the chain carries Phosphoserine. The segment covering 209–266 has biased composition (basic and acidic residues); the sequence is ADRHYSREQRYTDHGSDHHYRGKRDDFFYEDRNHDDWSHDYDNRRDSSRDGKWRSSRH.

In terms of assembly, component of the nuclear exosome targeting (NEXT) complex composed of MTREX, ZCCHC8, and RBM7 that directs a subset of non-coding short-lived RNAs for exosomal degradation. Interacts with ZCCHC8 and SF3B2/SAP145. Binds to MTREX through ZCCHC8. Interacts with YWHAE and YWHAZ; these interactions are stress-dependent and RBM7 phosphorylation dependent; release RNA from the NEXT complex and may affect RNA targeting to the nuclear RNA exosomome for degradation. Interacts with MEPCE and LARP7, the core subunits of 7SK snRNP; upon genotoxic stress this interaction is enhanced, triggering the release of inactive P-TEFb complex from the core and P-TEFb complex activation. In terms of processing, phosphorylated at Ser-136 by MAPK14/p38-alpha-activated MAPKAPK2/MK2; this phosphorylation is stress-dependent; this phosphorylation decreases its RNA-binding capacity therefore affecting RNA nuclear exosome-mediated degradation. This phosphorylation mediates YWHAE and YWHAZ interactions. As to expression, ubiquitous.

It is found in the nucleus. The protein localises to the nucleoplasm. Functionally, RNA-binding subunit of the trimeric nuclear exosome targeting (NEXT) complex, a complex that functions as an RNA exosome cofactor that directs a subset of non-coding short-lived RNAs for exosomal degradation. NEXT is involved in surveillance and turnover of aberrant transcripts and non-coding RNAs. Binds preferentially polyuridine sequences and associates with newly synthesized RNAs, including pre-mRNAs and short-lived exosome substrates such as promoter upstream transcripts (PROMPTs), enhancer RNAs (eRNAs), and 3'-extended products from small nuclear RNAs (snRNAs). Participates in several biological processes including DNA damage response (DDR) and stress response. During stress response, activation of the p38MAPK-MK2 pathway decreases RBM7-RNA-binding and subsequently the RNA exosome degradation activities, thereby modulating the turnover of non-coding transcriptome. Participates in DNA damage response (DDR), through its interaction with MEPCE and LARP7, the core subunits of 7SK snRNP complex, that release the positive transcription elongation factor b (P-TEFb) complex from the 7SK snRNP. In turn, activation of P-TEFb complex induces the transcription of P-TEFb-dependent DDR genes to promote cell viability. This Homo sapiens (Human) protein is RNA-binding protein 7.